The primary structure comprises 390 residues: Alanine racemase (390 aa).

K46 functions as the Proton acceptor; specific for D-alanine in the catalytic mechanism. K46 carries the N6-(pyridoxal phosphate)lysine modification. R144 lines the substrate pocket. The active-site Proton acceptor; specific for L-alanine is the Y275. Position 323 (M323) interacts with substrate.

It belongs to the alanine racemase family. Pyridoxal 5'-phosphate is required as a cofactor.

It carries out the reaction L-alanine = D-alanine. The protein operates within amino-acid biosynthesis; D-alanine biosynthesis; D-alanine from L-alanine: step 1/1. Functionally, catalyzes the interconversion of L-alanine and D-alanine. May also act on other amino acids. This Mycolicibacterium vanbaalenii (strain DSM 7251 / JCM 13017 / BCRC 16820 / KCTC 9966 / NRRL B-24157 / PYR-1) (Mycobacterium vanbaalenii) protein is Alanine racemase (alr).